Consider the following 446-residue polypeptide: Adenylosuccinate synthetase (446 aa).

Residues 21–27 (GDEGKGK) and 49–51 (GHT) contribute to the GTP site. The Proton acceptor role is filled by aspartate 22. Residues aspartate 22 and glycine 49 each contribute to the Mg(2+) site. Residues 22-25 (DEGK), 47-50 (NAGH), threonine 141, arginine 155, glutamine 236, threonine 251, and arginine 319 contribute to the IMP site. The active-site Proton donor is the histidine 50. 315–321 (VTTGRSR) is a substrate binding site. Residues arginine 321, 347 to 349 (KLD), and 429 to 431 (STS) contribute to the GTP site.

It belongs to the adenylosuccinate synthetase family. Homodimer. It depends on Mg(2+) as a cofactor.

It is found in the cytoplasm. It carries out the reaction IMP + L-aspartate + GTP = N(6)-(1,2-dicarboxyethyl)-AMP + GDP + phosphate + 2 H(+). It functions in the pathway purine metabolism; AMP biosynthesis via de novo pathway; AMP from IMP: step 1/2. In terms of biological role, plays an important role in the de novo pathway of purine nucleotide biosynthesis. Catalyzes the first committed step in the biosynthesis of AMP from IMP. The protein is Adenylosuccinate synthetase of Polaromonas naphthalenivorans (strain CJ2).